A 197-amino-acid polypeptide reads, in one-letter code: TLE family member 5 (197 aa).

The interval 166–197 (LSALGSQTHLSKEDKNGHDGDTHQEDDGEKSD) is CCN domain. A disordered region spans residues 170–197 (GSQTHLSKEDKNGHDGDTHQEDDGEKSD). The segment covering 175-197 (LSKEDKNGHDGDTHQEDDGEKSD) has biased composition (basic and acidic residues). Position 196 is a phosphoserine (S196).

Belongs to the WD repeat Groucho/TLE family. Homooligomer and heterooligomer with other family members. Binds TCF7 and the NF-kappa-B subunit RELA. Interacts with PHF12. Interacts (via Q domain) with SIX3. Interacts with SIX6. Post-translationally, ubiquitinated by XIAP/BIRC4. In terms of tissue distribution, ubiquitously expressed in developing embryos by midgestation, a wide expression is conserved in adult. In mouse, abundantly expressed in muscle, heart and brain.

The protein localises to the nucleus. Functionally, transcriptional corepressor. Acts as a dominant repressor towards other family members. Inhibits NF-kappa-B-regulated gene expression. May be required for the initiation and maintenance of the differentiated state. Essential for the transcriptional repressor activity of SIX3 during retina and lens development. In Mus musculus (Mouse), this protein is TLE family member 5.